The chain runs to 189 residues: Elongation factor P (189 aa).

This sequence belongs to the elongation factor P family.

The protein localises to the cytoplasm. It functions in the pathway protein biosynthesis; polypeptide chain elongation. Involved in peptide bond synthesis. Stimulates efficient translation and peptide-bond synthesis on native or reconstituted 70S ribosomes in vitro. Probably functions indirectly by altering the affinity of the ribosome for aminoacyl-tRNA, thus increasing their reactivity as acceptors for peptidyl transferase. The sequence is that of Elongation factor P from Orientia tsutsugamushi (strain Ikeda) (Rickettsia tsutsugamushi).